The chain runs to 136 residues: Large ribosomal subunit protein uL16 (136 aa).

Belongs to the universal ribosomal protein uL16 family. Part of the 50S ribosomal subunit.

In terms of biological role, binds 23S rRNA and is also seen to make contacts with the A and possibly P site tRNAs. The sequence is that of Large ribosomal subunit protein uL16 from Rickettsia akari (strain Hartford).